A 351-amino-acid chain; its full sequence is GDP-mannose 4,6-dehydratase (351 aa).

Residues Gly-11–Asp-16, Asp-66–Met-67, Leu-88–Ser-92, and Tyr-103 contribute to the NADP(+) site. Thr-135 is an active-site residue. Catalysis depends on nucleophile residues Glu-137 and Tyr-159. NADP(+)-binding residues include Lys-163, His-189, and Arg-194.

This sequence belongs to the NAD(P)-dependent epimerase/dehydratase family. GDP-mannose 4,6-dehydratase subfamily. Requires NADP(+) as cofactor.

It carries out the reaction GDP-alpha-D-mannose = GDP-4-dehydro-alpha-D-rhamnose + H2O. The protein operates within nucleotide-sugar biosynthesis; GDP-L-fucose biosynthesis via de novo pathway; GDP-L-fucose from GDP-alpha-D-mannose: step 1/2. Catalyzes the conversion of GDP-D-mannose to GDP-4-dehydro-6-deoxy-D-mannose. The chain is GDP-mannose 4,6-dehydratase from Sinorhizobium fredii (strain HH103).